The primary structure comprises 340 residues: Flap endonuclease 1 (340 aa).

Positions 1-98 (MGLNLKDLVV…AEIERRKQIK (98 aa)) are N-domain. Mg(2+) contacts are provided by Asp-27, Asp-80, Glu-152, Glu-154, Asp-173, Asp-175, and Asp-236. The I-domain stretch occupies residues 116 to 258 (DARKYAQQTT…TALKMIKQHS (143 aa)).

The protein belongs to the XPG/RAD2 endonuclease family. FEN1 subfamily. As to quaternary structure, interacts with PCNA. PCNA stimulates the nuclease activity without altering cleavage specificity. Mg(2+) is required as a cofactor.

In terms of biological role, structure-specific nuclease with 5'-flap endonuclease and 5'-3' exonuclease activities involved in DNA replication and repair. During DNA replication, cleaves the 5'-overhanging flap structure that is generated by displacement synthesis when DNA polymerase encounters the 5'-end of a downstream Okazaki fragment. Binds the unpaired 3'-DNA end and kinks the DNA to facilitate 5' cleavage specificity. Cleaves one nucleotide into the double-stranded DNA from the junction in flap DNA, leaving a nick for ligation. Also involved in the base excision repair (BER) pathway. Acts as a genome stabilization factor that prevents flaps from equilibrating into structures that lead to duplications and deletions. Also possesses 5'-3' exonuclease activity on nicked or gapped double-stranded DNA. The sequence is that of Flap endonuclease 1 from Nitrosopumilus maritimus (strain SCM1).